The chain runs to 331 residues: Fe-S cluster assembly protein DRE2 (331 aa).

Residues 1–146 (MSEILLLLHP…MPTFKKPVSS (146 aa)) form an N-terminal SAM-like domain region. The interval 142-164 (KPVSSPVTLTDTSANNTDAEDDL) is disordered. The segment covering 146–158 (SPVTLTDTSANNT) has biased composition (polar residues). Residues 147–202 (PVTLTDTSANNTDAEDDLSMKRKLDSTKLAYFSDDSSGEEDDLIDENELIADSHKF) are linker. Positions 212, 224, 227, and 229 each coordinate [2Fe-2S] cluster. Residues 212 to 229 (CELPNGKKRKKACKDCTC) form a fe-S binding site A region. The [4Fe-4S] cluster site is built by cysteine 294, cysteine 297, cysteine 305, and cysteine 308. 2 consecutive short sequence motifs (cx2C motif) follow at residues 294-297 (CSSC) and 305-308 (CDGC). The segment at 294 to 308 (CSSCALGDAFRCDGC) is fe-S binding site B.

This sequence belongs to the anamorsin family. In terms of assembly, monomer. Interacts with TAH18. Interacts with MIA40. [2Fe-2S] cluster is required as a cofactor. It depends on [4Fe-4S] cluster as a cofactor.

The protein localises to the cytoplasm. Its subcellular location is the mitochondrion intermembrane space. Component of the cytosolic iron-sulfur (Fe-S) protein assembly (CIA) machinery required for the maturation of extramitochondrial Fe-S proteins. Part of an electron transfer chain functioning in an early step of cytosolic Fe-S biogenesis, facilitating the de novo assembly of a [4Fe-4S] cluster on the scaffold complex CFD1-NBP35. Electrons are transferred to DRE2 from NADPH via the FAD- and FMN-containing protein TAH18. TAH18-DRE2 are also required for the assembly of the diferric tyrosyl radical cofactor of ribonucleotide reductase (RNR), probably by providing electrons for reduction during radical cofactor maturation in the catalytic small subunit RNR2. This Clavispora lusitaniae (strain ATCC 42720) (Yeast) protein is Fe-S cluster assembly protein DRE2.